A 121-amino-acid chain; its full sequence is Large ribosomal subunit protein uL24 (121 aa).

Residues 1–30 (MVRIVSKQPRKQRKARYNAPNHTRGRFLSA) form a disordered region.

It belongs to the universal ribosomal protein uL24 family. As to quaternary structure, part of the 50S ribosomal subunit.

Functionally, one of two assembly initiator proteins, it binds directly to the 5'-end of the 23S rRNA, where it nucleates assembly of the 50S subunit. Located at the polypeptide exit tunnel on the outside of the subunit. This Methanoculleus marisnigri (strain ATCC 35101 / DSM 1498 / JR1) protein is Large ribosomal subunit protein uL24.